The primary structure comprises 147 residues: Peptide methionine sulfoxide reductase MsrB (147 aa).

The segment covering 1-11 (MPKIVKKEPKF) has biased composition (basic and acidic residues). Residues 1–25 (MPKIVKKEPKFVEQSGKKVTKSDEQ) form a disordered region. The 123-residue stretch at 23–145 (DEQWREQLSD…NSVSLIFNKS (123 aa)) folds into the MsrB domain. Residues Cys-62, Cys-65, Cys-111, and Cys-114 each coordinate Zn(2+). Cys-134 serves as the catalytic Nucleophile.

Belongs to the MsrB Met sulfoxide reductase family. Zn(2+) serves as cofactor.

It catalyses the reaction L-methionyl-[protein] + [thioredoxin]-disulfide + H2O = L-methionyl-(R)-S-oxide-[protein] + [thioredoxin]-dithiol. This chain is Peptide methionine sulfoxide reductase MsrB, found in Vibrio parahaemolyticus serotype O3:K6 (strain RIMD 2210633).